The following is a 518-amino-acid chain: Forkhead box protein H1 (518 aa).

The tract at residues 72-113 (GSMYGLSPGTHEGSCTHTHEGPKDSMAGDQTRSRKSKKKNYH) is disordered. Basic residues predominate over residues 104-113 (SRKSKKKNYH). A DNA-binding region (fork-head) is located at residues 117–213 (KPPYSYLAMI…MKLQNTALTR (97 aa)). Positions 318-397 (KPTRNARSPG…NYSPIEPPKK (80 aa)) are disordered. The segment covering 329-346 (STIHSTYSSSSSSISTIS) has biased composition (low complexity). The segment at 380–506 (TSSDPDTGNY…PSFLSQCLGS (127 aa)) is SMAD-interaction domain (SID). Positions 405 to 409 (LPTSY) match the Fast/FoxH1 motif 1 (FM1) motif. The Fast/FoxH1 motif 2 (FM2) signature appears at 415–421 (PNVVAPP). Residues 470–491 (LDNMLRAMPPNKSVFDVLTSHP) carry the SMAD interaction motif (SIM) motif.

As to quaternary structure, ARF1 contains 2 smad2s, 1 smad4 and 1 foxh1/fast-1 protein. Interaction with smad4 is most likely indirect through interaction with the MH2 domain of smad2. Binds to the MH2 domain of smad3, which can incorporate into the ARF1 complex. The ARF1 and ARF2 complexes are activated by distinct TGF-beta family members; formation of ARF1 is promoted by activin. Interacts (via Fork-head domain) with gtf2ird1/wbscr11 (via repeats 4-5). As to expression, highly expressed in the animal cap (prospective ectoderm) and prospective mesoderm of stage 10.25 embryos.

It is found in the nucleus. Transcriptional activator. Recognizes and binds to the DNA sequence 5'-TGT[GT][GT]ATT-3'. Upon TGF-beta induction, forms a transcriptionally active complex with smad2 and smad4 called activin-responsive factor 1 (ARF1), which binds a site on the mix-B/mix.2 promoter called the activin response element (ARE). Binds to activated smads and the ARE with much lower affinity than fast3. Necessary for the first steps in mesoderm specification, directly inducing mesodermal genes. Acts with fast3 to control the convergent extension movements of gastrulation. Binds to the proximal element (PE) of the gsc gene and cooperates with gtf2ird1/wbscr11 and SMAD proteins to regulate gsc transcription. The chain is Forkhead box protein H1 (foxh1) from Xenopus laevis (African clawed frog).